We begin with the raw amino-acid sequence, 1155 residues long: Alpha,alpha-trehalose-phosphate synthase [UDP-forming] 1 (1155 aa).

Residues 56-94 are disordered; it reads LQRRRSVSSRGGSLRGSMDSLNDSGQNGAEDVIGVEDEE. Over residues 63–72 the composition is skewed to low complexity; that stretch reads SSRGGSLRGS.

In the N-terminal section; belongs to the glycosyltransferase 20 family. This sequence in the C-terminal section; belongs to the gob-1 trehalose phosphatase family.

It catalyses the reaction D-glucose 6-phosphate + UDP-alpha-D-glucose = alpha,alpha-trehalose 6-phosphate + UDP + H(+). Functionally, catalyzes the production of trehalose from glucose-6-phosphate and UDP-alpha-D-glucose in a 2 step process. The protein is Alpha,alpha-trehalose-phosphate synthase [UDP-forming] 1 (tps-1) of Aphelenchoides avenae (Mycophagous nematode worm).